The chain runs to 121 residues: Small ribosomal subunit protein uS13 (121 aa).

Residues 97–121 form a disordered region; it reads VRGQRTRTNARTRRGARKTVAGKKK. Basic residues predominate over residues 100–121; that stretch reads QRTRTNARTRRGARKTVAGKKK.

The protein belongs to the universal ribosomal protein uS13 family. Part of the 30S ribosomal subunit. Forms a loose heterodimer with protein S19. Forms two bridges to the 50S subunit in the 70S ribosome.

Functionally, located at the top of the head of the 30S subunit, it contacts several helices of the 16S rRNA. In the 70S ribosome it contacts the 23S rRNA (bridge B1a) and protein L5 of the 50S subunit (bridge B1b), connecting the 2 subunits; these bridges are implicated in subunit movement. Contacts the tRNAs in the A and P-sites. This chain is Small ribosomal subunit protein uS13, found in Prochlorococcus marinus (strain MIT 9313).